The following is a 249-amino-acid chain: GTP cyclohydrolase 1 type 2 homolog (249 aa).

A divalent metal cation contacts are provided by histidine 64, histidine 65, aspartate 102, histidine 217, and glutamate 221.

This sequence belongs to the GTP cyclohydrolase I type 2/NIF3 family. In terms of assembly, homohexamer.

The polypeptide is GTP cyclohydrolase 1 type 2 homolog (Neisseria meningitidis serogroup B (strain ATCC BAA-335 / MC58)).